A 271-amino-acid polypeptide reads, in one-letter code: Glutamate racemase (271 aa).

Substrate-binding positions include 12-13 and 44-45; these read DS and YG. Cysteine 75 (proton donor/acceptor) is an active-site residue. 76 to 77 contacts substrate; the sequence is NS. Cysteine 185 (proton donor/acceptor) is an active-site residue. 186–187 provides a ligand contact to substrate; that stretch reads TH.

The protein belongs to the aspartate/glutamate racemases family.

It catalyses the reaction L-glutamate = D-glutamate. It participates in cell wall biogenesis; peptidoglycan biosynthesis. In terms of biological role, provides the (R)-glutamate required for cell wall biosynthesis. The polypeptide is Glutamate racemase (Mycobacterium bovis (strain ATCC BAA-935 / AF2122/97)).